The primary structure comprises 293 residues: Probable 2-(5''-triphosphoribosyl)-3'-dephosphocoenzyme-A synthase (293 aa).

The protein belongs to the CitG/MdcB family.

It carries out the reaction 3'-dephospho-CoA + ATP = 2'-(5''-triphospho-alpha-D-ribosyl)-3'-dephospho-CoA + adenine. Involved in the formation of 2-(5''-phosphoribosyl)-3'-dephosphocoenzyme-A, the prosthetic group of the acyl-carrier protein of the malonate decarboxylase. This is Probable 2-(5''-triphosphoribosyl)-3'-dephosphocoenzyme-A synthase from Pseudomonas paraeruginosa (strain DSM 24068 / PA7) (Pseudomonas aeruginosa (strain PA7)).